The following is a 658-amino-acid chain: Threonine--tRNA ligase (658 aa).

In terms of domain architecture, TGS spans 1–64 (MSNTVSLQFP…GASGKVEIIT (64 aa)). The interval 246–548 (DHRRLGREMD…LIENFAGHMP (303 aa)) is catalytic. Zn(2+) contacts are provided by Cys-343, His-394, and His-525.

Belongs to the class-II aminoacyl-tRNA synthetase family. As to quaternary structure, homodimer. Zn(2+) serves as cofactor.

The protein localises to the cytoplasm. The catalysed reaction is tRNA(Thr) + L-threonine + ATP = L-threonyl-tRNA(Thr) + AMP + diphosphate + H(+). Its function is as follows. Catalyzes the attachment of threonine to tRNA(Thr) in a two-step reaction: L-threonine is first activated by ATP to form Thr-AMP and then transferred to the acceptor end of tRNA(Thr). Also edits incorrectly charged L-seryl-tRNA(Thr). The protein is Threonine--tRNA ligase of Brucella canis (strain ATCC 23365 / NCTC 10854 / RM-666).